The following is a 208-amino-acid chain: Ribosomal RNA large subunit methyltransferase E (208 aa).

The S-adenosyl-L-methionine site is built by Gly63, Trp65, Asp83, Asp99, and Asp124. The Proton acceptor role is filled by Lys164.

It belongs to the class I-like SAM-binding methyltransferase superfamily. RNA methyltransferase RlmE family.

The protein resides in the cytoplasm. It catalyses the reaction uridine(2552) in 23S rRNA + S-adenosyl-L-methionine = 2'-O-methyluridine(2552) in 23S rRNA + S-adenosyl-L-homocysteine + H(+). Functionally, specifically methylates the uridine in position 2552 of 23S rRNA at the 2'-O position of the ribose in the fully assembled 50S ribosomal subunit. This is Ribosomal RNA large subunit methyltransferase E from Alcanivorax borkumensis (strain ATCC 700651 / DSM 11573 / NCIMB 13689 / SK2).